The sequence spans 295 residues: tRNA-cytidine(32) 2-sulfurtransferase (295 aa).

A PP-loop motif motif is present at residues 63–68 (SGGKDS). The [4Fe-4S] cluster site is built by cysteine 138, cysteine 141, and cysteine 229.

It belongs to the TtcA family. Homodimer. Mg(2+) serves as cofactor. The cofactor is [4Fe-4S] cluster.

It is found in the cytoplasm. It catalyses the reaction cytidine(32) in tRNA + S-sulfanyl-L-cysteinyl-[cysteine desulfurase] + AH2 + ATP = 2-thiocytidine(32) in tRNA + L-cysteinyl-[cysteine desulfurase] + A + AMP + diphosphate + H(+). It functions in the pathway tRNA modification. Functionally, catalyzes the ATP-dependent 2-thiolation of cytidine in position 32 of tRNA, to form 2-thiocytidine (s(2)C32). The sulfur atoms are provided by the cysteine/cysteine desulfurase (IscS) system. This chain is tRNA-cytidine(32) 2-sulfurtransferase, found in Hyphomonas neptunium (strain ATCC 15444).